A 741-amino-acid polypeptide reads, in one-letter code: Probable basic-leucine zipper transcription factor I (741 aa).

Positions 77–117 (QIIEQIQFLQQQQQQQHDQIQQQLHNFQQQYQQQYQQRQQQ) form a coiled coil. Composition is skewed to low complexity over residues 153–164 (QQPPQSLQQQQQ), 172–237 (PQQQ…QIQK), 277–290 (IQQQ…IQQK), and 381–390 (QQQQQQQQQQ). Disordered stretches follow at residues 153-237 (QQPP…QIQK), 277-305 (IQQQ…SNSM), and 349-390 (KQKE…QQQQ). The 64-residue stretch at 429–492 (ESKKSIKRIN…HEGGTMAILK (64 aa)) folds into the bZIP domain. Positions 431–432 (KK) are basic motif. The leucine-zipper stretch occupies residues 434-441 (IKRINQNI).

This sequence belongs to the bZIP family.

Its subcellular location is the nucleus. Probable transcriptional regulator. The protein is Probable basic-leucine zipper transcription factor I (bzpI) of Dictyostelium discoideum (Social amoeba).